The chain runs to 149 residues: Calmodulin (149 aa).

A2 carries the post-translational modification N-acetylalanine. EF-hand domains follow at residues 8 to 43, 44 to 79, 81 to 116, and 117 to 149; these read DQIS…LGQN, PTEA…KMKD, DSEE…LGEK, and LTDE…MMAK. Ca(2+) is bound by residues D21, D23, D25, C27, E32, D57, D59, N61, T63, E68, D94, D96, N98, and E105. An N6,N6,N6-trimethyllysine modification is found at K116. Residues D130, D132, D134, Q136, and E141 each coordinate Ca(2+).

This sequence belongs to the calmodulin family.

Functionally, calmodulin mediates the control of a large number of enzymes, ion channels and other proteins by Ca(2+). Among the enzymes to be stimulated by the calmodulin-Ca(2+) complex are a number of protein kinases and phosphatases. This chain is Calmodulin (CCM1), found in Capsicum annuum (Capsicum pepper).